Here is a 430-residue protein sequence, read N- to C-terminus: Small ribosomal subunit protein uS5m (430 aa).

Residues 218 to 282 (FDTRILEVRN…NRAVHHLHYI (65 aa)) form the S5 DRBM domain.

It belongs to the universal ribosomal protein uS5 family. In terms of assembly, component of the mitochondrial small ribosomal subunit (mt-SSU). Mature mammalian 55S mitochondrial ribosomes consist of a small (28S) and a large (39S) subunit. The 28S small subunit contains a 12S ribosomal RNA (12S mt-rRNA) and 30 different proteins. The 39S large subunit contains a 16S rRNA (16S mt-rRNA), a copy of mitochondrial valine transfer RNA (mt-tRNA(Val)), which plays an integral structural role, and 52 different proteins.

It localises to the mitochondrion. This chain is Small ribosomal subunit protein uS5m (MRPS5), found in Homo sapiens (Human).